Reading from the N-terminus, the 69-residue chain is Toxin Tz2 (69 aa).

The signal sequence occupies residues 1 to 7 (IEVVMGG). Residues 8 to 69 (KEGYLLDKSN…KMWDLKTNKC (62 aa)) form the LCN-type CS-alpha/beta domain. 4 disulfides stabilise this stretch: cysteine 19-cysteine 69, cysteine 23-cysteine 45, cysteine 31-cysteine 50, and cysteine 35-cysteine 52.

This sequence belongs to the long (4 C-C) scorpion toxin superfamily. Sodium channel inhibitor family. Beta subfamily. As to expression, expressed by the venom gland.

The protein resides in the secreted. Functionally, beta toxins bind voltage-independently at site-4 of sodium channels (Nav) and shift the voltage of activation toward more negative potentials thereby affecting sodium channel activation and promoting spontaneous and repetitive firing. The sequence is that of Toxin Tz2 from Tityus zulianus (Venezuelan scorpion).